The primary structure comprises 377 residues: Alanine racemase (377 aa).

The Proton acceptor; specific for D-alanine role is filled by K35. At K35 the chain carries N6-(pyridoxal phosphate)lysine. Residue R130 participates in substrate binding. Y260 serves as the catalytic Proton acceptor; specific for L-alanine. M312 contributes to the substrate binding site.

Belongs to the alanine racemase family. Requires pyridoxal 5'-phosphate as cofactor.

The catalysed reaction is L-alanine = D-alanine. It participates in amino-acid biosynthesis; D-alanine biosynthesis; D-alanine from L-alanine: step 1/1. Functionally, catalyzes the interconversion of L-alanine and D-alanine. May also act on other amino acids. This is Alanine racemase (alr) from Leptothrix cholodnii (strain ATCC 51168 / LMG 8142 / SP-6) (Leptothrix discophora (strain SP-6)).